Here is a 1551-residue protein sequence, read N- to C-terminus: Pentafunctional AROM polypeptide 2 (1551 aa).

Residues 1 to 379 (MSIEKVSILG…YESKAHQIFK (379 aa)) are 3-dehydroquinate synthase. NAD(+)-binding positions include 42–44 (DTN), 80–83 (ENHK), 111–113 (GGV), and Asp-116. Arg-127 lines the 7-phospho-2-dehydro-3-deoxy-D-arabino-heptonate pocket. NAD(+) is bound at residue 136–137 (TT). Residues Asp-143 and Lys-149 each coordinate 7-phospho-2-dehydro-3-deoxy-D-arabino-heptonate. Lys-158 is an NAD(+) binding site. Asn-159 contributes to the 7-phospho-2-dehydro-3-deoxy-D-arabino-heptonate binding site. NAD(+) is bound by residues 176 to 179 (FLQT) and Asn-187. Glu-191 serves as a coordination point for Zn(2+). 7-phospho-2-dehydro-3-deoxy-D-arabino-heptonate is bound by residues 191–194 (EVVK) and Lys-243. Glu-253 (proton acceptor; for 3-dehydroquinate synthase activity) is an active-site residue. 7-phospho-2-dehydro-3-deoxy-D-arabino-heptonate is bound by residues 257 to 261 (RNLLN) and His-264. His-264 serves as a coordination point for Zn(2+). His-268 (proton acceptor; for 3-dehydroquinate synthase activity) is an active-site residue. Positions 280 and 351 each coordinate 7-phospho-2-dehydro-3-deoxy-D-arabino-heptonate. His-280 is a binding site for Zn(2+). The tract at residues 392–835 (VHPFANRHPE…WDVLHSKFNA (444 aa)) is EPSP synthase. The interval 854-1044 (DRSIVIIGMR…LPATRSTFVT (191 aa)) is shikimate kinase. Residue 861–868 (GMRAAGKT) coordinates ATP. Positions 1045–1258 (LTYPDLRKVP…IGVGQLSLKE (214 aa)) are 3-dehydroquinase. The Proton acceptor; for 3-dehydroquinate dehydratase activity role is filled by His-1162. The active-site Schiff-base intermediate with substrate; for 3-dehydroquinate dehydratase activity is the Lys-1191. Positions 1271–1551 (EKEFWVVGFP…KVIHSAVLNE (281 aa)) are shikimate dehydrogenase.

It in the N-terminal section; belongs to the sugar phosphate cyclases superfamily. Dehydroquinate synthase family. This sequence in the 2nd section; belongs to the EPSP synthase family. In the 3rd section; belongs to the shikimate kinase family. The protein in the 4th section; belongs to the type-I 3-dehydroquinase family. It in the C-terminal section; belongs to the shikimate dehydrogenase family. As to quaternary structure, homodimer. The cofactor is Zn(2+).

The protein resides in the cytoplasm. The catalysed reaction is 7-phospho-2-dehydro-3-deoxy-D-arabino-heptonate = 3-dehydroquinate + phosphate. It catalyses the reaction 3-dehydroquinate = 3-dehydroshikimate + H2O. The enzyme catalyses shikimate + NADP(+) = 3-dehydroshikimate + NADPH + H(+). It carries out the reaction shikimate + ATP = 3-phosphoshikimate + ADP + H(+). The catalysed reaction is 3-phosphoshikimate + phosphoenolpyruvate = 5-O-(1-carboxyvinyl)-3-phosphoshikimate + phosphate. It participates in metabolic intermediate biosynthesis; chorismate biosynthesis; chorismate from D-erythrose 4-phosphate and phosphoenolpyruvate: step 2/7. The protein operates within metabolic intermediate biosynthesis; chorismate biosynthesis; chorismate from D-erythrose 4-phosphate and phosphoenolpyruvate: step 3/7. Its pathway is metabolic intermediate biosynthesis; chorismate biosynthesis; chorismate from D-erythrose 4-phosphate and phosphoenolpyruvate: step 4/7. It functions in the pathway metabolic intermediate biosynthesis; chorismate biosynthesis; chorismate from D-erythrose 4-phosphate and phosphoenolpyruvate: step 5/7. It participates in metabolic intermediate biosynthesis; chorismate biosynthesis; chorismate from D-erythrose 4-phosphate and phosphoenolpyruvate: step 6/7. In terms of biological role, the AROM polypeptide catalyzes 5 consecutive enzymatic reactions in prechorismate polyaromatic amino acid biosynthesis. The sequence is that of Pentafunctional AROM polypeptide 2 from Lodderomyces elongisporus (strain ATCC 11503 / CBS 2605 / JCM 1781 / NBRC 1676 / NRRL YB-4239) (Yeast).